The chain runs to 430 residues: Bifunctional protein GlmU (430 aa).

A pyrophosphorylase region spans residues 1–227 (MISKTHTFVI…GEEATGINNR (227 aa)). Residues lysine 25, glutamine 74, 79 to 80 (GT), 104 to 106 (YGD), glycine 140, glutamate 154, asparagine 168, and asparagine 225 each bind UDP-N-acetyl-alpha-D-glucosamine. Residue aspartate 106 participates in Mg(2+) binding. Mg(2+) is bound at residue asparagine 225. The interval 228–248 (NDLIKAEFYFQENKRKIFTDS) is linker. An N-acetyltransferase region spans residues 249 to 430 (GVTLVAPETV…REKQVTKRIK (182 aa)). UDP-N-acetyl-alpha-D-glucosamine contacts are provided by arginine 314 and lysine 332. Catalysis depends on histidine 344, which acts as the Proton acceptor. Tyrosine 347 and asparagine 358 together coordinate UDP-N-acetyl-alpha-D-glucosamine. Residues alanine 361, 367-368 (NY), alanine 404, and arginine 421 contribute to the acetyl-CoA site.

The protein in the N-terminal section; belongs to the N-acetylglucosamine-1-phosphate uridyltransferase family. In the C-terminal section; belongs to the transferase hexapeptide repeat family. As to quaternary structure, homotrimer. It depends on Mg(2+) as a cofactor.

It localises to the cytoplasm. It carries out the reaction alpha-D-glucosamine 1-phosphate + acetyl-CoA = N-acetyl-alpha-D-glucosamine 1-phosphate + CoA + H(+). It catalyses the reaction N-acetyl-alpha-D-glucosamine 1-phosphate + UTP + H(+) = UDP-N-acetyl-alpha-D-glucosamine + diphosphate. It functions in the pathway nucleotide-sugar biosynthesis; UDP-N-acetyl-alpha-D-glucosamine biosynthesis; N-acetyl-alpha-D-glucosamine 1-phosphate from alpha-D-glucosamine 6-phosphate (route II): step 2/2. It participates in nucleotide-sugar biosynthesis; UDP-N-acetyl-alpha-D-glucosamine biosynthesis; UDP-N-acetyl-alpha-D-glucosamine from N-acetyl-alpha-D-glucosamine 1-phosphate: step 1/1. The protein operates within bacterial outer membrane biogenesis; LPS lipid A biosynthesis. In terms of biological role, catalyzes the last two sequential reactions in the de novo biosynthetic pathway for UDP-N-acetylglucosamine (UDP-GlcNAc). The C-terminal domain catalyzes the transfer of acetyl group from acetyl coenzyme A to glucosamine-1-phosphate (GlcN-1-P) to produce N-acetylglucosamine-1-phosphate (GlcNAc-1-P), which is converted into UDP-GlcNAc by the transfer of uridine 5-monophosphate (from uridine 5-triphosphate), a reaction catalyzed by the N-terminal domain. The protein is Bifunctional protein GlmU of Wolbachia pipientis wMel.